The chain runs to 268 residues: Bis(5'-nucleosyl)-tetraphosphatase, symmetrical (268 aa).

This sequence belongs to the Ap4A hydrolase family.

It catalyses the reaction P(1),P(4)-bis(5'-adenosyl) tetraphosphate + H2O = 2 ADP + 2 H(+). Hydrolyzes diadenosine 5',5'''-P1,P4-tetraphosphate to yield ADP. The sequence is that of Bis(5'-nucleosyl)-tetraphosphatase, symmetrical from Vibrio campbellii (strain ATCC BAA-1116).